The sequence spans 76 residues: Putative membrane protein insertion efficiency factor (76 aa).

This sequence belongs to the UPF0161 family.

The protein localises to the cell inner membrane. Functionally, could be involved in insertion of integral membrane proteins into the membrane. The chain is Putative membrane protein insertion efficiency factor from Anaeromyxobacter dehalogenans (strain 2CP-C).